The primary structure comprises 468 residues: MAQFFKEKANKSKQLSPKLSLNVTQLDHLGAGMAQHQGKVVFIPQALPGERVSVQLTDQKKSFAKAKLIKIEQQSPERADASCPHYGHCGGCDLQHLALDAQQNHKQQSLNELMVKFSGSPVIDPQVQAAPLVSPPWHYRRRARLATYFNNNDKSLKLGFRALSSKQIVPIKQCPVLAEPLSALINPFSLLLARLKAKASLGHLELTQADNGTFAVLRVTKVLPAADIRALASFALTQGINLLLQDDSGALTDVMTMAPAEDEGATQVEQSALTLPEYALSQGQVSCQFTPGNFVQVNAEVNQRMVEQAVNWLDLQVGERVLDLFCGVGNFSLALANRGQNLDGLEVIGVEGVPEMVQQARENAKRNNLANLSFYHADLSADLSNEKWLGKIDKLLLDPARAGAFESLQWLQKMKPKKVVYVSCNPASLARDSSVLLSQGYQLKQLSMIDMFPQTHHIEAMALFEIAT.

Residues 12-70 enclose the TRAM domain; it reads SKQLSPKLSLNVTQLDHLGAGMAQHQGKVVFIPQALPGERVSVQLTDQKKSFAKAKLIK. Residues cysteine 83, cysteine 89, cysteine 92, and cysteine 174 each contribute to the [4Fe-4S] cluster site. Glutamine 296, phenylalanine 325, asparagine 330, glutamate 351, aspartate 378, and aspartate 398 together coordinate S-adenosyl-L-methionine. The active-site Nucleophile is the cysteine 424.

Belongs to the class I-like SAM-binding methyltransferase superfamily. RNA M5U methyltransferase family. RlmD subfamily.

It carries out the reaction uridine(1939) in 23S rRNA + S-adenosyl-L-methionine = 5-methyluridine(1939) in 23S rRNA + S-adenosyl-L-homocysteine + H(+). Catalyzes the formation of 5-methyl-uridine at position 1939 (m5U1939) in 23S rRNA. This chain is 23S rRNA (uracil(1939)-C(5))-methyltransferase RlmD, found in Shewanella denitrificans (strain OS217 / ATCC BAA-1090 / DSM 15013).